The chain runs to 93 residues: MSRSLKKGPFVDEHLMKKVEAQADQEKKSVIKTWSRRSTIFPSFIGYTIAVYDGRKHVPVYIQEDMVGHKLGEFVPTRTFHGHGNDDKKTGVR.

Belongs to the universal ribosomal protein uS19 family.

Functionally, protein S19 forms a complex with S13 that binds strongly to the 16S ribosomal RNA. This Ligilactobacillus salivarius (strain UCC118) (Lactobacillus salivarius) protein is Small ribosomal subunit protein uS19.